The sequence spans 73 residues: Beta-defensin 40 (73 aa).

Positions 1–23 are cleaved as a signal peptide; it reads MKISCFLLMIFFLSCFQINPVAV. 3 disulfide bridges follow: Cys29-Cys58, Cys36-Cys51, and Cys41-Cys59.

This sequence belongs to the beta-defensin family. In terms of tissue distribution, only expressed in epididymis (corpus, cauda and caput).

Its subcellular location is the secreted. In terms of biological role, has antibacterial activity. In Mus musculus (Mouse), this protein is Beta-defensin 40 (Defb40).